The following is a 328-amino-acid chain: Fructose-1,6-bisphosphatase class 1 (328 aa).

Positions 91, 110, 112, and 113 each coordinate Mg(2+). Residues 113–116, Asn205, and 257–259 each bind substrate; these read DGSS and YLY. A Mg(2+)-binding site is contributed by Glu277.

Belongs to the FBPase class 1 family. Homotetramer. Mg(2+) is required as a cofactor.

The protein resides in the cytoplasm. It carries out the reaction beta-D-fructose 1,6-bisphosphate + H2O = beta-D-fructose 6-phosphate + phosphate. It participates in carbohydrate biosynthesis; gluconeogenesis. The protein is Fructose-1,6-bisphosphatase class 1 of Azorhizobium caulinodans (strain ATCC 43989 / DSM 5975 / JCM 20966 / LMG 6465 / NBRC 14845 / NCIMB 13405 / ORS 571).